The primary structure comprises 656 residues: MFQNNPLLSQLKKQIQEDIPKRQGKVKATDRGYGFLETDKGKRFFIPPSEMKKVLHGDQINAFIRGKGDKSTAEPNQLKKTGSAVFIARLVIKQKNISIIPKNPLLKGFFKIKGSQSLQSRGYQDGDWVKVELVSHALEGNGFLTQIIEKIADASDPFAYRLLTVATHNLANKAPEFDHPWKIIDPQLSRSDLTKTPFFTIDGVNTQDMDDALYIEADENGWKLTVAISDPSAYVPENSDMDAEAKRRAFTLYLPNFNVPMLPRDLSDSLCSLKEGEKRATLCCTIHINKKGEIEGEPAFYGAWIKSHYRLNYTDVSNYLENEELSNDCWKPSTQLAEQLRTLDSLSLKRLQWRTDNNAVFKNQPDYTLKLNNKGEISEILCEPRRSANRLVEESMIAANICAGDFLAKHKQQGVFNTHSGFSSERLGKVVSLLSEFGIESDIQTLATVTGYTKIRQQTNLLHNSYLDHRLRKLLSYADIKNTPEAHFTLGVDHYATWTSPIRKYGDLLNHRLIKSVLLKEDNIQIDNEIGQVLNAARKLQRLAERDVNNILYSQYLKNQVESKWRYKAEIFDIIKAGIRVKIQENGATFFIPCSLLCKDSSDATKIDCNQALGKVIIAQQTELQLGDVIDVMLNNVKVESGQLIGKLAESLTISE.

One can recognise an RNB domain in the interval 190–518 (RSDLTKTPFF…LNHRLIKSVL (329 aa)). An S1 motif domain is found at 564–649 (KWRYKAEIFD…ESGQLIGKLA (86 aa)).

This sequence belongs to the RNR ribonuclease family. RNase II subfamily.

Its subcellular location is the cytoplasm. The catalysed reaction is Exonucleolytic cleavage in the 3'- to 5'-direction to yield nucleoside 5'-phosphates.. Its function is as follows. Involved in mRNA degradation. Hydrolyzes single-stranded polyribonucleotides processively in the 3' to 5' direction. The sequence is that of Exoribonuclease 2 from Psychromonas ingrahamii (strain DSM 17664 / CCUG 51855 / 37).